Reading from the N-terminus, the 187-residue chain is Cerebral dopamine neurotrophic factor (187 aa).

Positions 1-24 (MRCTSPAALVTFCAGLWISNHVLA) are cleaved as a signal peptide. Cystine bridges form between C37/C124, C40/C113, and C71/C82.

The protein belongs to the ARMET family.

It is found in the secreted. Its function is as follows. Trophic factor for dopamine neurons. Prevents the 6-hydroxydopamine (6-OHDA)-induced degeneration of dopaminergic neurons. When administered after 6-OHDA-lesioning, restores the dopaminergic function and prevents the degeneration of dopaminergic neurons in substantia nigra. The polypeptide is Cerebral dopamine neurotrophic factor (Cdnf) (Rattus norvegicus (Rat)).